Here is a 124-residue protein sequence, read N- to C-terminus: Large ribosomal subunit protein bL12 (124 aa).

Positions 94-124 are disordered; the sequence is APKPVKESVPKAAAEEAKKKLEEAGAKAEIK.

Belongs to the bacterial ribosomal protein bL12 family. Homodimer. Part of the ribosomal stalk of the 50S ribosomal subunit. Forms a multimeric L10(L12)X complex, where L10 forms an elongated spine to which 2 to 4 L12 dimers bind in a sequential fashion. Binds GTP-bound translation factors.

Forms part of the ribosomal stalk which helps the ribosome interact with GTP-bound translation factors. Is thus essential for accurate translation. This chain is Large ribosomal subunit protein bL12, found in Paraburkholderia phytofirmans (strain DSM 17436 / LMG 22146 / PsJN) (Burkholderia phytofirmans).